Reading from the N-terminus, the 529-residue chain is Bifunctional purine biosynthesis protein PurH (529 aa).

In terms of domain architecture, MGS-like spans 1-148; that stretch reads MQQRRPVRRA…KNHKDVAIVV (148 aa). The residue at position 287 (Lys287) is an N6-acetyllysine.

It belongs to the PurH family.

It carries out the reaction (6R)-10-formyltetrahydrofolate + 5-amino-1-(5-phospho-beta-D-ribosyl)imidazole-4-carboxamide = 5-formamido-1-(5-phospho-D-ribosyl)imidazole-4-carboxamide + (6S)-5,6,7,8-tetrahydrofolate. It catalyses the reaction IMP + H2O = 5-formamido-1-(5-phospho-D-ribosyl)imidazole-4-carboxamide. It participates in purine metabolism; IMP biosynthesis via de novo pathway; 5-formamido-1-(5-phospho-D-ribosyl)imidazole-4-carboxamide from 5-amino-1-(5-phospho-D-ribosyl)imidazole-4-carboxamide (10-formyl THF route): step 1/1. It functions in the pathway purine metabolism; IMP biosynthesis via de novo pathway; IMP from 5-formamido-1-(5-phospho-D-ribosyl)imidazole-4-carboxamide: step 1/1. In Escherichia coli (strain SMS-3-5 / SECEC), this protein is Bifunctional purine biosynthesis protein PurH.